We begin with the raw amino-acid sequence, 156 residues long: MDLEFGRFPIFSILEDMLEAPEEQTEKTRNNPSRAYMRDAKAMAATPADVIEHPDAYVFAVDMPGIKGDEIQVQIENENVLVVSGKRQRDNKENEGVKFVRMERRMGKFMRKFQLPDNADLEKISAACNDGVLKVTIPKLPPPEPKKPKTIQVQVA.

Positions 39 to 156 (DAKAMAATPA…KPKTIQVQVA (118 aa)) constitute a sHSP domain.

It belongs to the small heat shock protein (HSP20) family. In terms of assembly, may form oligomeric structures.

It localises to the cytoplasm. The protein is 17.7 kDa class II heat shock protein (HSP17.7) of Arabidopsis thaliana (Mouse-ear cress).